Here is a 522-residue protein sequence, read N- to C-terminus: Protein DETOXIFICATION 31 (522 aa).

Transmembrane regions (helical) follow at residues 89–109 (GAVT…AVSI), 113–133 (VIAG…ETLC), 154–174 (VILS…APIL), 183–203 (ISAM…AYAI), 217–237 (IMVM…FTWL), 249–269 (LALV…VYIF), 299–319 (AAML…AGYL), 324–344 (VSVA…MVAF), 371–391 (VVAV…LLFF), 415–435 (MLAF…VAVG), 441–461 (VVAY…GLLL), and 471–491 (GIWW…TWMI).

This sequence belongs to the multi antimicrobial extrusion (MATE) (TC 2.A.66.1) family.

It is found in the membrane. In terms of biological role, positively mediates root hair elongation. The protein is Protein DETOXIFICATION 31 of Arabidopsis thaliana (Mouse-ear cress).